The chain runs to 103 residues: Large ribosomal subunit protein bL25 (103 aa).

Belongs to the bacterial ribosomal protein bL25 family. Part of the 50S ribosomal subunit; part of the 5S rRNA/L5/L18/L25 subcomplex. Contacts the 5S rRNA. Binds to the 5S rRNA independently of L5 and L18.

Functionally, this is one of the proteins that binds to the 5S RNA in the ribosome where it forms part of the central protuberance. This chain is Large ribosomal subunit protein bL25, found in Blochmanniella floridana.